Consider the following 169-residue polypeptide: MAQGDDNKQAIGQIIRQEQALIFPSLDENDAFSLGQRIRDIAVKDKLGIAIDISLWDRRLFFAATAGATADNTEWLRRKFNVVRRFHVSTYRLVLEQNREDRMFAPYKALDVADYALAGGGFPIRVSGAGVIGAVIVSGLPQREDHNLVVRAVAEHVGQDPVALALPAA.

Belongs to the UPF0303 family.

In Brucella abortus biovar 1 (strain 9-941), this protein is UPF0303 protein BruAb1_1406.